The following is a 367-amino-acid chain: Flagellar P-ring protein (367 aa).

The N-terminal stretch at 1 to 18 (MFRALITALFCFSGLALA) is a signal peptide.

Belongs to the FlgI family. The basal body constitutes a major portion of the flagellar organelle and consists of four rings (L,P,S, and M) mounted on a central rod.

Its subcellular location is the periplasm. The protein resides in the bacterial flagellum basal body. Functionally, assembles around the rod to form the L-ring and probably protects the motor/basal body from shearing forces during rotation. This chain is Flagellar P-ring protein, found in Rhizorhabdus wittichii (strain DSM 6014 / CCUG 31198 / JCM 15750 / NBRC 105917 / EY 4224 / RW1) (Sphingomonas wittichii).